The following is a 200-amino-acid chain: Adenylyl-sulfate kinase (200 aa).

35–42 (GLPASGKS) contributes to the ATP binding site. S109 serves as the catalytic Phosphoserine intermediate.

Belongs to the APS kinase family.

It catalyses the reaction adenosine 5'-phosphosulfate + ATP = 3'-phosphoadenylyl sulfate + ADP + H(+). The protein operates within sulfur metabolism; hydrogen sulfide biosynthesis; sulfite from sulfate: step 2/3. Its function is as follows. Catalyzes the synthesis of activated sulfate. The protein is Adenylyl-sulfate kinase of Thermodesulfovibrio yellowstonii (strain ATCC 51303 / DSM 11347 / YP87).